Here is a 77-residue protein sequence, read N- to C-terminus: Chassatide C13 (77 aa).

The first 24 residues, 1–24 (MAKFATQLLLFVLIASLVMLEVHA), serve as a signal peptide directing secretion. Positions 25–44 (SNTFQVPDLGKRLLMNRDPN) are cleaved as a propeptide — removed in mature form. Residues 45 to 75 (GFPCAESCVYIPCTVTALLGCSCRNRVCYRN) constitute a cross-link (cyclopeptide (Gly-Asn)). Intrachain disulfides connect Cys-48/Cys-65, Cys-52/Cys-67, and Cys-57/Cys-72. A propeptide spans 76-77 (EL) (removed in mature form).

Post-translationally, this is a cyclic peptide. As to expression, expressed in fruit and pedicel but not in root, leaf and stem (at protein level).

Its function is as follows. Probably participates in a plant defense mechanism. The chain is Chassatide C13 from Chassalia chartacea (Chassalia curviflora).